The sequence spans 976 residues: Synaptonemal complex protein 1 (976 aa).

Residues 101–111 (GLSRVYSKLYK) carry the Mediates head to head self-assembly of N-terminal ends motif. The Nuclear localization signal motif lies at 117 to 120 (KKWK). The interaction with SYCE3 stretch occupies residues 206 to 362 (ETRQVYMDLN…CQLTEEKETQ (157 aa)). 4 coiled-coil regions span residues 211–316 (YMDL…SIEK), 391–439 (LRTE…LKKV), 499–685 (VKDL…VEKA), and 739–798 (EQEQ…KTQT). Residues 676 to 770 (ENLLEEVEKA…LSVKKQLEIE (95 aa)) form a required for pH-induced assembly of C-terminal ends into antiparallel tetramers region. Residues 679–682 (LEEV) carry the Nuclear localization signal motif. Residues 784–976 (NTATLKEKKD…KLKEAEKLFV (193 aa)) are DNA-binding. Residues 880–883 (KKRK) carry the Nuclear localization signal motif.

In terms of assembly, structural component of synaptonemal complexes. Homotetramer that consists of an N-terminal four-helical bundle that bifurcates into two elongated C-terminal dimeric coiled coils. This tetrameric building block potentially self-assembles into a supramolecular zipper-like lattice to mediate meiotic chromosome synapsis. Self-assembly is likely initiated by local proton density at chromosome axis, which is predicted to trigger antiparallel back to back assembly of adjacent C-terminal ends into tetrameric structures that anchor to chromosomal DNA. Then the N-terminal ends are predicted to undergo cooperative antiparallel head to head assembly at the midline of synaptonemal complexes central element to form a zipper-like lattice between properly aligned homologous chromosomes. The nascent synapsis generated by SYCP1 is stabilized through interaction with central element proteins SYCE1 and SYCE2. Interacts (via tetrameric core) with SYCE3; the interaction remodels SYCP1 homotetramers to 2:1 heterotrimers with SYCE3. SYCP1/SYCE3 heterotrimers form lattice assemblies as part of the mature synaptonemal complex via both lateral and head-to-head interactions. Forms a complex with EWSR1, PRDM9, SYCP3 and REC8; complex formation is dependent of phosphorylated form of REC8 and requires PRDM9 bound to hotspot DNA; EWSR1 joins PRDM9 with the chromosomal axis through REC8. Interacts with SPO16. In terms of tissue distribution, testis.

It localises to the nucleus. Its subcellular location is the chromosome. The protein resides in the centromere. Major component of the transverse filaments of synaptonemal complexes, formed between homologous chromosomes during meiotic prophase. Required for normal assembly of the central element of the synaptonemal complexes. Required for normal centromere pairing during meiosis. Required for normal meiotic chromosome synapsis during oocyte and spermatocyte development and for normal male and female fertility. The sequence is that of Synaptonemal complex protein 1 from Homo sapiens (Human).